We begin with the raw amino-acid sequence, 185 residues long: Elongation factor P (185 aa).

The protein belongs to the elongation factor P family.

It is found in the cytoplasm. Its pathway is protein biosynthesis; polypeptide chain elongation. In terms of biological role, involved in peptide bond synthesis. Stimulates efficient translation and peptide-bond synthesis on native or reconstituted 70S ribosomes in vitro. Probably functions indirectly by altering the affinity of the ribosome for aminoacyl-tRNA, thus increasing their reactivity as acceptors for peptidyl transferase. The sequence is that of Elongation factor P from Streptococcus pyogenes serotype M49 (strain NZ131).